The sequence spans 212 residues: Large ribosomal subunit protein uL3 (212 aa).

At Q153 the chain carries N5-methylglutamine.

The protein belongs to the universal ribosomal protein uL3 family. Part of the 50S ribosomal subunit. Forms a cluster with proteins L14 and L19. In terms of processing, methylated by PrmB.

In terms of biological role, one of the primary rRNA binding proteins, it binds directly near the 3'-end of the 23S rRNA, where it nucleates assembly of the 50S subunit. This is Large ribosomal subunit protein uL3 from Shewanella halifaxensis (strain HAW-EB4).